Reading from the N-terminus, the 104-residue chain is Pyrimidine/purine nucleoside phosphorylase (104 aa).

The protein belongs to the nucleoside phosphorylase PpnP family.

It carries out the reaction a purine D-ribonucleoside + phosphate = a purine nucleobase + alpha-D-ribose 1-phosphate. The enzyme catalyses adenosine + phosphate = alpha-D-ribose 1-phosphate + adenine. It catalyses the reaction cytidine + phosphate = cytosine + alpha-D-ribose 1-phosphate. The catalysed reaction is guanosine + phosphate = alpha-D-ribose 1-phosphate + guanine. It carries out the reaction inosine + phosphate = alpha-D-ribose 1-phosphate + hypoxanthine. The enzyme catalyses thymidine + phosphate = 2-deoxy-alpha-D-ribose 1-phosphate + thymine. It catalyses the reaction uridine + phosphate = alpha-D-ribose 1-phosphate + uracil. The catalysed reaction is xanthosine + phosphate = alpha-D-ribose 1-phosphate + xanthine. Functionally, catalyzes the phosphorolysis of diverse nucleosides, yielding D-ribose 1-phosphate and the respective free bases. Can use uridine, adenosine, guanosine, cytidine, thymidine, inosine and xanthosine as substrates. Also catalyzes the reverse reactions. The polypeptide is Pyrimidine/purine nucleoside phosphorylase (Colwellia psychrerythraea (strain 34H / ATCC BAA-681) (Vibrio psychroerythus)).